The sequence spans 678 residues: Glycine--tRNA ligase beta subunit (678 aa).

Belongs to the class-II aminoacyl-tRNA synthetase family. In terms of assembly, tetramer of two alpha and two beta subunits.

The protein resides in the cytoplasm. The catalysed reaction is tRNA(Gly) + glycine + ATP = glycyl-tRNA(Gly) + AMP + diphosphate. This is Glycine--tRNA ligase beta subunit from Streptococcus pneumoniae (strain ATCC BAA-255 / R6).